Consider the following 226-residue polypeptide: Holliday junction branch migration complex subunit RuvA (226 aa).

The tract at residues 1–67 is domain I; that stretch reads MITSVYAKIE…AINKELYAFK (67 aa). Residues 68-145 form a domain II region; the sequence is SLKEKEWFKA…YLKNQIVVSD (78 aa). Residues 146 to 167 form a flexible linker region; sequence KVEPQIDDDEKIDDSKDLNDDE. Residues 168 to 226 form a domain III region; the sequence is LLSEIVIEAIDCLISLGYKQEQIKTALAEIDLKNESINDSADLVAVIIKQIGLRTSEVS.

Belongs to the RuvA family. Homotetramer. Forms an RuvA(8)-RuvB(12)-Holliday junction (HJ) complex. HJ DNA is sandwiched between 2 RuvA tetramers; dsDNA enters through RuvA and exits via RuvB. An RuvB hexamer assembles on each DNA strand where it exits the tetramer. Each RuvB hexamer is contacted by two RuvA subunits (via domain III) on 2 adjacent RuvB subunits; this complex drives branch migration. In the full resolvosome a probable DNA-RuvA(4)-RuvB(12)-RuvC(2) complex forms which resolves the HJ.

It localises to the cytoplasm. Functionally, the RuvA-RuvB-RuvC complex processes Holliday junction (HJ) DNA during genetic recombination and DNA repair, while the RuvA-RuvB complex plays an important role in the rescue of blocked DNA replication forks via replication fork reversal (RFR). RuvA specifically binds to HJ cruciform DNA, conferring on it an open structure. The RuvB hexamer acts as an ATP-dependent pump, pulling dsDNA into and through the RuvAB complex. HJ branch migration allows RuvC to scan DNA until it finds its consensus sequence, where it cleaves and resolves the cruciform DNA. The protein is Holliday junction branch migration complex subunit RuvA of Mycoplasmoides gallisepticum (strain R(low / passage 15 / clone 2)) (Mycoplasma gallisepticum).